A 293-amino-acid chain; its full sequence is 4-hydroxybenzoate octaprenyltransferase (293 aa).

Helical transmembrane passes span 26–46 (IGTL…AKGM), 49–69 (IKVL…GCII), 102–122 (LFAL…PLVV), 148–168 (FLGI…LGEV), 173–193 (WWLF…YAMI), 217–237 (WIAV…LSAE), 240–260 (FIYA…QRLI), and 272–292 (FLNN…DYLL).

This sequence belongs to the UbiA prenyltransferase family. Mg(2+) serves as cofactor.

Its subcellular location is the cell inner membrane. It carries out the reaction all-trans-octaprenyl diphosphate + 4-hydroxybenzoate = 4-hydroxy-3-(all-trans-octaprenyl)benzoate + diphosphate. It participates in cofactor biosynthesis; ubiquinone biosynthesis. Functionally, catalyzes the prenylation of para-hydroxybenzoate (PHB) with an all-trans polyprenyl group. Mediates the second step in the final reaction sequence of ubiquinone-8 (UQ-8) biosynthesis, which is the condensation of the polyisoprenoid side chain with PHB, generating the first membrane-bound Q intermediate 3-octaprenyl-4-hydroxybenzoate. In Shewanella denitrificans (strain OS217 / ATCC BAA-1090 / DSM 15013), this protein is 4-hydroxybenzoate octaprenyltransferase.